A 405-amino-acid chain; its full sequence is Transposase from transposon Tn1545 (405 aa).

In terms of domain architecture, Core-binding (CB) spans 79–163 (GKKMTLCQLY…SLKASFYIAI (85 aa)). The Tyr recombinase domain maps to 186 to 392 (VPKTVLTEEQ…TFDSAMAEMK (207 aa)). Active-site residues include Arg-225, Lys-264, His-343, Arg-346, and His-369. The active-site O-(3'-phospho-DNA)-tyrosine intermediate is Tyr-379.

Belongs to the 'phage' integrase family.

The protein is Transposase from transposon Tn1545 (int) of Streptococcus agalactiae serotype V (strain ATCC BAA-611 / 2603 V/R).